The following is a 326-amino-acid chain: Virulence factor CaO19.6688 (326 aa).

5 disordered regions span residues 19 to 91, 112 to 137, 161 to 184, 222 to 245, and 276 to 326; these read FNSL…KLPS, EEDN…GTTK, NTTI…PSFP, NVGQ…NDLL, and YEYG…PKIK. 3 stretches are compositionally biased toward low complexity: residues 21–42, 53–78, and 117–137; these read SLKS…SSSS, NRNT…NTTP, and EQQL…GTTK.

Virulence factor involved in pathogen-host interaction. Modulates host pro-inflammatory cytokine interleukin-1 beta (IL1B) expression. This chain is Virulence factor CaO19.6688, found in Candida albicans (strain SC5314 / ATCC MYA-2876) (Yeast).